Consider the following 63-residue polypeptide: Cysteine-rich venom protein 3 (63 aa).

The N-terminal stretch at 1 to 25 (MRKPITLILVVALALVLLATSEVSA) is a signal peptide. Disulfide bonds link Cys29-Cys43, Cys36-Cys48, and Cys42-Cys58.

As to expression, expressed by the venom gland.

The protein localises to the secreted. The polypeptide is Cysteine-rich venom protein 3 (Pimpla hypochondriaca (Parasitoid wasp)).